Consider the following 118-residue polypeptide: Large ribosomal subunit protein bL20 (118 aa).

Belongs to the bacterial ribosomal protein bL20 family.

Binds directly to 23S ribosomal RNA and is necessary for the in vitro assembly process of the 50S ribosomal subunit. It is not involved in the protein synthesizing functions of that subunit. The sequence is that of Large ribosomal subunit protein bL20 from Parvibaculum lavamentivorans (strain DS-1 / DSM 13023 / NCIMB 13966).